A 940-amino-acid polypeptide reads, in one-letter code: Beta-mannosidase A (940 aa).

A signal peptide spans 1-21 (MHFHGIATQAVLASNITTGSG). N-linked (GlcNAc...) asparagine glycans are attached at residues asparagine 15, asparagine 39, asparagine 79, asparagine 245, asparagine 314, asparagine 321, and asparagine 344. The active-site Proton donor is the glutamate 476. N-linked (GlcNAc...) asparagine glycosylation is found at asparagine 534, asparagine 605, asparagine 626, asparagine 653, asparagine 733, asparagine 761, and asparagine 785.

It belongs to the glycosyl hydrolase 2 family. Beta-mannosidase A subfamily. As to quaternary structure, homodimer.

It localises to the secreted. It carries out the reaction Hydrolysis of terminal, non-reducing beta-D-mannose residues in beta-D-mannosides.. It functions in the pathway glycan metabolism; N-glycan degradation. Exoglycosidase that cleaves the single beta-linked mannose residue from the non-reducing end of beta-mannosidic oligosaccharides of various complexity and length. Involved in the degradation of polymeric mannan and galactomannan. In Emericella nidulans (strain FGSC A4 / ATCC 38163 / CBS 112.46 / NRRL 194 / M139) (Aspergillus nidulans), this protein is Beta-mannosidase A (mndA).